A 67-amino-acid chain; its full sequence is Teratocyte protein CftICK-II (67 aa).

An N-terminal signal peptide occupies residues 1–25 (MVKSLLFAIGYLIFLLVTRVNVINA). 3 cysteine pairs are disulfide-bonded: C28–C42, C35–C46, and C41–C57.

Abundantly expressed by teratocytes, which are extra-embryonic cells released by parasitoid wasps into their hosts during larval eclosion.

It is found in the secreted. Its function is as follows. This endoparasitoid wasp peptide has immununosuppressive, antimicrobial and insecticidal activities. Suppress cellular immunity which is detectable as a reduction of hemocyte encapsulation in the host. Shows moderate antifungal activity against C.albicans (MIC=4 ug/ml). In vivo, ingestion of this peptide (probably at excessive doses) increases larval mortality and reduces leaf consumption of D.saccharalis, a permissive host for C.flavipes. The polypeptide is Teratocyte protein CftICK-II (Cotesia flavipes (Parasitic wasp)).